The primary structure comprises 360 residues: Phosphate acyltransferase (360 aa).

This sequence belongs to the PlsX family. In terms of assembly, homodimer. Probably interacts with PlsY.

It localises to the cytoplasm. It catalyses the reaction a fatty acyl-[ACP] + phosphate = an acyl phosphate + holo-[ACP]. The protein operates within lipid metabolism; phospholipid metabolism. Its function is as follows. Catalyzes the reversible formation of acyl-phosphate (acyl-PO(4)) from acyl-[acyl-carrier-protein] (acyl-ACP). This enzyme utilizes acyl-ACP as fatty acyl donor, but not acyl-CoA. This chain is Phosphate acyltransferase, found in Caulobacter vibrioides (strain ATCC 19089 / CIP 103742 / CB 15) (Caulobacter crescentus).